The chain runs to 151 residues: Protein E6 (151 aa).

Zinc fingers lie at residues 30-66 and 103-139; these read CVYC…CKQC and CHRC…CANC. The PDZ-binding domain signature appears at 149 to 151; it reads TQV.

Belongs to the papillomaviridae E6 protein family. As to quaternary structure, forms homodimers. Interacts with ubiquitin-protein ligase UBE3A/E6-AP and thus forms a complex with human TP53. Interacts with human NFX1 and MAGI3. Interacts with human IRF3; this interaction inhibits the establishment of antiviral state. Interacts with human TYK2; this interaction inhibits JAK-STAT activation by interferon alpha. Interacts with host DLG1; this interaction leads to the proteasomal degradation of DLG1.

The protein localises to the host cytoplasm. It is found in the host nucleus. Its function is as follows. Plays a major role in the induction and maintenance of cellular transformation. Acts mainly as an oncoprotein by stimulating the destruction of many host cell key regulatory proteins. E6 associates with host UBE3A/E6-AP ubiquitin-protein ligase, and inactivates tumor suppressors TP53 and TP73 by targeting them to the 26S proteasome for degradation. In turn, DNA damage and chromosomal instabilities increase and lead to cell proliferation and cancer development. The complex E6/E6AP targets several other substrates to degradation via the proteasome including host DLG1 or NFX1, a repressor of human telomerase reverse transcriptase (hTERT). The resulting increased expression of hTERT prevents the shortening of telomere length leading to cell immortalization. Other cellular targets including BAK1, Fas-associated death domain-containing protein (FADD) and procaspase 8, are degraded by E6/E6AP causing inhibition of apoptosis. E6 also inhibits immune response by interacting with host IRF3 and TYK2. These interactions prevent IRF3 transcriptional activities and inhibit TYK2-mediated JAK-STAT activation by interferon alpha resulting in inhibition of the interferon signaling pathway. This chain is Protein E6, found in Human papillomavirus 51.